A 365-amino-acid polypeptide reads, in one-letter code: Protein RecA (365 aa).

Residue 69–76 (GPESSGKT) coordinates ATP. The interval 344 to 365 (LDDNPDTDDHDVEDIDENTDEE) is disordered. Positions 347–365 (NPDTDDHDVEDIDENTDEE) are enriched in acidic residues.

The protein belongs to the RecA family.

The protein localises to the cytoplasm. Functionally, can catalyze the hydrolysis of ATP in the presence of single-stranded DNA, the ATP-dependent uptake of single-stranded DNA by duplex DNA, and the ATP-dependent hybridization of homologous single-stranded DNAs. It interacts with LexA causing its activation and leading to its autocatalytic cleavage. The sequence is that of Protein RecA from Arthrospira platensis (Spirulina platensis).